The following is a 332-amino-acid chain: Malate dehydrogenase, cytoplasmic (332 aa).

Residues 16–17 (QI), Asp-43, and Gly-90 contribute to the NAD(+) site. Residue Arg-99 participates in oxaloacetate binding. Positions 113 and 132 each coordinate NAD(+). Asn-132, Arg-163, His-188, and Ser-243 together coordinate oxaloacetate. His-188 acts as the Proton acceptor in catalysis.

This sequence belongs to the LDH/MDH superfamily. MDH type 2 family. In terms of assembly, homodimer.

It is found in the cytoplasm. The enzyme catalyses (S)-malate + NAD(+) = oxaloacetate + NADH + H(+). The sequence is that of Malate dehydrogenase, cytoplasmic (NR1) from Beta vulgaris (Sugar beet).